Here is a 365-residue protein sequence, read N- to C-terminus: Cobalt-precorrin-5B C(1)-methyltransferase (365 aa).

It belongs to the CbiD family.

The catalysed reaction is Co-precorrin-5B + S-adenosyl-L-methionine = Co-precorrin-6A + S-adenosyl-L-homocysteine. It functions in the pathway cofactor biosynthesis; adenosylcobalamin biosynthesis; cob(II)yrinate a,c-diamide from sirohydrochlorin (anaerobic route): step 6/10. Catalyzes the methylation of C-1 in cobalt-precorrin-5B to form cobalt-precorrin-6A. The polypeptide is Cobalt-precorrin-5B C(1)-methyltransferase (Clostridium perfringens (strain SM101 / Type A)).